The primary structure comprises 414 residues: Translation initiation factor 2 subunit gamma (414 aa).

One can recognise a tr-type G domain in the interval 8 to 206 (QPEVNIGVVG…AIEKFIPTPP (199 aa)). The G1 stretch occupies residues 17–24 (GHVDHGKT). Residues Asp-20, Thr-24, Gly-45, and Thr-47 each coordinate Mg(2+). Residue 20-25 (DHGKTT) coordinates GTP. The interval 45-49 (GMTIK) is G2. Zn(2+) contacts are provided by Cys-60, Cys-63, Cys-75, and Cys-77. Residues 93–96 (DAPG) are G3. Residues 149–152 (NKVD) and 184–186 (SAL) each bind GTP. The segment at 149–152 (NKVD) is G4. Residues 184 to 186 (SAL) are G5.

This sequence belongs to the TRAFAC class translation factor GTPase superfamily. Classic translation factor GTPase family. EIF2G subfamily. Heterotrimer composed of an alpha, a beta and a gamma chain. It depends on Mg(2+) as a cofactor.

The enzyme catalyses GTP + H2O = GDP + phosphate + H(+). Its function is as follows. eIF-2 functions in the early steps of protein synthesis by forming a ternary complex with GTP and initiator tRNA. In Aeropyrum pernix (strain ATCC 700893 / DSM 11879 / JCM 9820 / NBRC 100138 / K1), this protein is Translation initiation factor 2 subunit gamma.